We begin with the raw amino-acid sequence, 490 residues long: Cytochrome P450 2C1 (490 aa).

C435 contacts heme.

This sequence belongs to the cytochrome P450 family. Heme is required as a cofactor.

The protein resides in the endoplasmic reticulum membrane. It localises to the microsome membrane. It catalyses the reaction an organic molecule + reduced [NADPH--hemoprotein reductase] + O2 = an alcohol + oxidized [NADPH--hemoprotein reductase] + H2O + H(+). Functionally, cytochromes P450 are a group of heme-thiolate monooxygenases. In liver microsomes, this enzyme is involved in an NADPH-dependent electron transport pathway. It oxidizes a variety of structurally unrelated compounds, including steroids, fatty acids, and xenobiotics. The polypeptide is Cytochrome P450 2C1 (CYP2C1) (Oryctolagus cuniculus (Rabbit)).